A 156-amino-acid chain; its full sequence is Peptide methionine sulfoxide reductase MsrA (156 aa).

Residue cysteine 10 is part of the active site.

It belongs to the MsrA Met sulfoxide reductase family.

The catalysed reaction is L-methionyl-[protein] + [thioredoxin]-disulfide + H2O = L-methionyl-(S)-S-oxide-[protein] + [thioredoxin]-dithiol. The enzyme catalyses [thioredoxin]-disulfide + L-methionine + H2O = L-methionine (S)-S-oxide + [thioredoxin]-dithiol. Its function is as follows. Has an important function as a repair enzyme for proteins that have been inactivated by oxidation. Catalyzes the reversible oxidation-reduction of methionine sulfoxide in proteins to methionine. This chain is Peptide methionine sulfoxide reductase MsrA, found in Acidobacterium capsulatum (strain ATCC 51196 / DSM 11244 / BCRC 80197 / JCM 7670 / NBRC 15755 / NCIMB 13165 / 161).